Here is a 179-residue protein sequence, read N- to C-terminus: NAD(P)H-quinone oxidoreductase subunit I, chloroplastic (179 aa).

4Fe-4S ferredoxin-type domains are found at residues 55–84 and 95–124; these read GRIHFEFDKCIACEVCVRVCPIDLPVVDWR and LNYSIDFGVCIFCGNCVEYCPTNCLSMTEE. Residues C64, C67, C70, C74, C104, C107, C110, and C114 each coordinate [4Fe-4S] cluster.

It belongs to the complex I 23 kDa subunit family. NDH is composed of at least 16 different subunits, 5 of which are encoded in the nucleus. The cofactor is [4Fe-4S] cluster.

The protein localises to the plastid. Its subcellular location is the chloroplast thylakoid membrane. It catalyses the reaction a plastoquinone + NADH + (n+1) H(+)(in) = a plastoquinol + NAD(+) + n H(+)(out). It carries out the reaction a plastoquinone + NADPH + (n+1) H(+)(in) = a plastoquinol + NADP(+) + n H(+)(out). In terms of biological role, NDH shuttles electrons from NAD(P)H:plastoquinone, via FMN and iron-sulfur (Fe-S) centers, to quinones in the photosynthetic chain and possibly in a chloroplast respiratory chain. The immediate electron acceptor for the enzyme in this species is believed to be plastoquinone. Couples the redox reaction to proton translocation, and thus conserves the redox energy in a proton gradient. The protein is NAD(P)H-quinone oxidoreductase subunit I, chloroplastic of Acorus calamus (Sweet flag).